The following is a 205-amino-acid chain: Metalloproteinase inhibitor 1 (205 aa).

The signal sequence occupies residues 1-24; that stretch reads MMAPFASLASGILLLLSLIASSKA. Cysteine 25 lines the Zn(2+) pocket. Positions 25-28 are involved in metalloproteinase-binding; the sequence is CSCA. 6 disulfide bridges follow: cysteine 25/cysteine 94, cysteine 27/cysteine 123, cysteine 37/cysteine 148, cysteine 151/cysteine 197, cysteine 156/cysteine 161, and cysteine 169/cysteine 189. The region spanning 25–148 is the NTR domain; the sequence is CSCAPPHPQT…AFSKTYSAGC (124 aa). N-linked (GlcNAc...) asparagine glycosylation occurs at asparagine 54. The involved in metalloproteinase-binding stretch occupies residues 91–92; that stretch reads ES. An N-linked (GlcNAc...) asparagine glycan is attached at asparagine 102. Serine 179 is modified (phosphoserine).

The protein belongs to the protease inhibitor I35 (TIMP) family. As to quaternary structure, interacts with MMP1, MMP3, MMP10 and MMP13, but has only very low affinity for MMP14. Interacts with CD63; identified in a complex with CD63 and ITGB1. Post-translationally, the activity of TIMP1 is dependent on the presence of disulfide bonds. In terms of processing, N-glycosylated. Found in fetal and adult tissues. Highest levels are found in bone. Also found in lung, ovary and uterus.

Its subcellular location is the secreted. Its function is as follows. Metalloproteinase inhibitor that functions by forming one to one complexes with target metalloproteinases, such as collagenases, and irreversibly inactivates them by binding to their catalytic zinc cofactor. Acts on MMP1, MMP2, MMP3, MMP7, MMP8, MMP9, MMP10, MMP11, MMP12, MMP13 and MMP16. Does not act on MMP14. Also functions as a growth factor that regulates cell differentiation, migration and cell death and activates cellular signaling cascades via CD63 and ITGB1. Plays a role in integrin signaling. The sequence is that of Metalloproteinase inhibitor 1 (Timp1) from Mus musculus (Mouse).